We begin with the raw amino-acid sequence, 118 residues long: Hydrogenase maturation factor HypA (118 aa).

Residue His2 participates in Ni(2+) binding. Zn(2+) contacts are provided by Cys73, Cys76, Cys89, and Cys92.

It belongs to the HypA/HybF family.

Functionally, involved in the maturation of [NiFe] hydrogenases. Required for nickel insertion into the metal center of the hydrogenase. The chain is Hydrogenase maturation factor HypA from Shewanella oneidensis (strain ATCC 700550 / JCM 31522 / CIP 106686 / LMG 19005 / NCIMB 14063 / MR-1).